Here is a 1025-residue protein sequence, read N- to C-terminus: Synapsin (1025 aa).

Disordered regions lie at residues 1-94 (MKRG…SRES), 439-784 (VCRP…NYGS), 872-910 (YDSN…KHSD), and 995-1025 (DFSD…LDLK). Residues 34 to 52 (TKPPVAGGPPNMPPPPAPG) are compositionally biased toward pro residues. A compositionally biased stretch (low complexity) spans 454 to 463 (SRSSVSSRAE). Over residues 472–492 (PTPPLPAGPRPAPMGGPPPIP) the composition is skewed to pro residues. Composition is skewed to low complexity over residues 499 to 546 (VGSI…SSVS) and 594 to 626 (SETS…QFSF). Serine 539 carries the phosphoserine modification. The segment covering 651–673 (TTASSAVRPESSVSVSDSRNTDT) has biased composition (polar residues). Over residues 690–702 (QQERVNPFDKEPS) the composition is skewed to basic and acidic residues. Positions 703 to 725 (KSGSAASIHTSSSSSISSSSISS) are enriched in low complexity. Residues 726-735 (RINRNGNAIQ) are compositionally biased toward polar residues. Over residues 736-749 (SPPPPAGPPPPPPT) the composition is skewed to pro residues. Residues 750–759 (NVTAVGSNAN) show a composition bias toward polar residues. A compositionally biased stretch (low complexity) spans 760 to 772 (SSSGYRNSFSSSL). Over residues 872-904 (YDSNSIASQGEGLNNPSDLPSYTRPSYSRSESN) the composition is skewed to polar residues. Residues 995–1007 (DFSDSGSMSSIGS) are compositionally biased toward low complexity.

This sequence belongs to the synapsin family. Identified in a complex with Syt1 and nwk. In terms of tissue distribution, widely expressed in the embryonic and adult nervous system synaptic terminals.

It localises to the synapse. In terms of biological role, plays a significant role in nervous system function, which is subtle at the cellular level but manifests itself in complex behavior. This Drosophila melanogaster (Fruit fly) protein is Synapsin (Syn).